The following is a 106-amino-acid chain: Small ribosomal subunit protein bS20 (106 aa).

The disordered stretch occupies residues 1 to 32 (MAQKKPKRNLSALKRHRQSLKRRLRNKAKKSA).

In terms of assembly, part of the 30S ribosomal subunit.

Its function is as follows. One of the primary rRNA binding proteins, it binds directly to 16S rRNA where it nucleates assembly of the bottom of the body of the 30S subunit, by binding to several RNA helices of the 16S rRNA. The polypeptide is Small ribosomal subunit protein bS20 (rpsT) (Thermus thermophilus (strain ATCC 27634 / DSM 579 / HB8)).